The primary structure comprises 265 residues: Deoxyguanosine kinase, mitochondrial (265 aa).

32-40 serves as a coordination point for ATP; it reads GNIAVGKST. The substrate site is built by Glu-57, Tyr-88, Gln-99, and Arg-106. The Proton acceptor role is filled by Glu-129. The substrate site is built by Arg-130 and Asp-135. ATP is bound at residue 190–194; sequence RLQRR. Substrate is bound at residue Glu-199. 242-244 is an ATP binding site; that stretch reads EDF.

Belongs to the DCK/DGK family. As to quaternary structure, homodimer.

The protein resides in the mitochondrion. The catalysed reaction is 2'-deoxyguanosine + ATP = dGMP + ADP + H(+). Its function is as follows. Phosphorylates deoxyguanosine in the mitochondrial matrix with high efficiency but shows very low activity against other deoxynucleosides. In Xenopus laevis (African clawed frog), this protein is Deoxyguanosine kinase, mitochondrial.